We begin with the raw amino-acid sequence, 389 residues long: Type III polyketide synthase 21 (389 aa).

The active-site Nucleophile is Cys170.

It belongs to the thiolase-like superfamily. Chalcone/stilbene synthases family. Expressed in anthers. Expressed in young and adult flowers.

Plant type III polyketide synthases (PKSs) that catalyzes the condensation of fatty acyl-CoA with malonyl-CoA to generate triketide and tetraketide alpha-pyrones, the main components of pollen exine and potential sporopollenin precursors. The protein is Type III polyketide synthase 21 (PKS21) of Oryza sativa subsp. japonica (Rice).